The primary structure comprises 78 residues: Large ribosomal subunit protein bL28 (78 aa).

Belongs to the bacterial ribosomal protein bL28 family.

The protein is Large ribosomal subunit protein bL28 of Thioalkalivibrio sulfidiphilus (strain HL-EbGR7).